A 310-amino-acid chain; its full sequence is Choline trimethylamine-lyase activating enzyme (310 aa).

The 288-residue stretch at 17–304 (YDGPGVRTLV…EACIRKYDFP (288 aa)) folds into the Radical SAM core domain. [4Fe-4S] cluster contacts are provided by Cys31, Cys35, Cys38, Cys57, Cys60, Cys63, and Cys99. S-adenosyl-L-methionine is bound at residue 37–39 (WCS). 2 consecutive 4Fe-4S ferredoxin-type domains span residues 48–77 (YQVL…ISAS) and 79–109 (LRHG…VVGE). Residues Gly139, 188-190 (DVK), and His264 contribute to the S-adenosyl-L-methionine site.

The protein belongs to the organic radical-activating enzymes family. As to quaternary structure, monomer. It depends on [4Fe-4S] cluster as a cofactor.

It carries out the reaction glycyl-[protein] + reduced [flavodoxin] + S-adenosyl-L-methionine = glycin-2-yl radical-[protein] + semiquinone [flavodoxin] + 5'-deoxyadenosine + L-methionine + H(+). It participates in amine and polyamine metabolism; choline degradation. Its function is as follows. Catalyzes activation of the choline trimethylamine-lyase CutC under anaerobic conditions by generation of an organic free radical on a glycine residue, via a homolytic cleavage of S-adenosyl-L-methionine (SAM). Is involved in the anaerobic choline utilization pathway that allows D.alaskensis to grow on choline as a source of carbon and energy. This is Choline trimethylamine-lyase activating enzyme from Oleidesulfovibrio alaskensis (strain ATCC BAA-1058 / DSM 17464 / G20) (Desulfovibrio alaskensis).